A 1368-amino-acid chain; its full sequence is DNA-directed RNA polymerase subunit beta (1368 aa).

It belongs to the RNA polymerase beta chain family. As to quaternary structure, the RNAP catalytic core consists of 2 alpha, 1 beta, 1 beta' and 1 omega subunit. When a sigma factor is associated with the core the holoenzyme is formed, which can initiate transcription.

The catalysed reaction is RNA(n) + a ribonucleoside 5'-triphosphate = RNA(n+1) + diphosphate. Functionally, DNA-dependent RNA polymerase catalyzes the transcription of DNA into RNA using the four ribonucleoside triphosphates as substrates. The chain is DNA-directed RNA polymerase subunit beta from Herminiimonas arsenicoxydans.